A 542-amino-acid chain; its full sequence is Chaperonin GroEL 2 (542 aa).

Residues 30–33, Lys51, 87–91, Gly415, and Asp495 each bind ATP; these read TLGP and DGTTT.

The protein belongs to the chaperonin (HSP60) family. In terms of assembly, forms a cylinder of 14 subunits composed of two heptameric rings stacked back-to-back. Interacts with the co-chaperonin GroES.

Its subcellular location is the cytoplasm. The enzyme catalyses ATP + H2O + a folded polypeptide = ADP + phosphate + an unfolded polypeptide.. Its function is as follows. Together with its co-chaperonin GroES, plays an essential role in assisting protein folding. The GroEL-GroES system forms a nano-cage that allows encapsulation of the non-native substrate proteins and provides a physical environment optimized to promote and accelerate protein folding. The protein is Chaperonin GroEL 2 of Methylococcus capsulatus (strain ATCC 33009 / NCIMB 11132 / Bath).